Here is a 465-residue protein sequence, read N- to C-terminus: A-type ATP synthase subunit B (465 aa).

This sequence belongs to the ATPase alpha/beta chains family. Has multiple subunits with at least A(3), B(3), C, D, E, F, H, I and proteolipid K(x).

The protein resides in the cell membrane. In terms of biological role, component of the A-type ATP synthase that produces ATP from ADP in the presence of a proton gradient across the membrane. The B chain is a regulatory subunit. The polypeptide is A-type ATP synthase subunit B (Thermococcus kodakarensis (strain ATCC BAA-918 / JCM 12380 / KOD1) (Pyrococcus kodakaraensis (strain KOD1))).